Reading from the N-terminus, the 345-residue chain is UPF0324 membrane protein HH_1161 (345 aa).

A run of 10 helical transmembrane segments spans residues 7 to 29 (GFLY…SATL), 33 to 50 (LSPL…SPFY), 90 to 112 (LGLN…AIFI), 122 to 141 (ISLL…ILAL), 154 to 176 (VALG…IYYA), 186 to 208 (WGIF…AISP), 215 to 237 (IIVK…YIIF), 262 to 281 (LYIP…NSFI), 293 to 312 (FASK…QIDW), and 322 to 344 (TFAL…VYIM).

The protein belongs to the UPF0324 family.

It is found in the cell membrane. This is UPF0324 membrane protein HH_1161 from Helicobacter hepaticus (strain ATCC 51449 / 3B1).